We begin with the raw amino-acid sequence, 601 residues long: Protein FREE1 (601 aa).

The segment at 1 to 240 (MQQGDYNSYY…SGEYPAFEDS (240 aa)) is disordered. Positions 21–35 (TPNPNPNPNPSPPAP) are enriched in pro residues. Polar residues-rich tracts occupy residues 63–79 (DYSN…QNSE) and 125–155 (LSSY…QHQT). A compositionally biased stretch (pro residues) spans 161–175 (APPPSSAPAPNPNPA). Over residues 176–197 (PYSSSLYSAPPYSSGGSSIPPS) the composition is skewed to low complexity. Basic and acidic residues predominate over residues 214–231 (NRSRSDLGSDLYGKRSDS). The residue at position 218 (serine 218) is a Phosphoserine. The nuclear export signal stretch occupies residues 338–344 (LDGLRML). The FYVE-type zinc-finger motif lies at 455 to 515 (DEAVSKCTSC…VCDRCMAEVS (61 aa)). Zn(2+) contacts are provided by cysteine 461, cysteine 464, cysteine 477, cysteine 480, cysteine 485, cysteine 488, cysteine 507, and cysteine 510. Positions 527–552 (RNVSLQSHEDLARKLQEEMERNRKSS) form a coiled coil. Phosphoserine occurs at positions 530 and 533. Residues 542–561 (QEEMERNRKSSSGLREGSGR) are disordered.

As to quaternary structure, part of the ESCRT-I complex. Interacts with VPS23A and VPS23B, but not with VPS28 or VPS37. Interacts with IRT1. Interacts with SH3P2. Interacts with SH3P3, but not with SH3P1. Interacts (via N-terminus) with PYL4 and PYR3. Interacts (via C-terminus) with SNRK2D/SNRK2.2, SNRK2I/SNRK2.3, ABF4 and ABI5. Interacts with SINAT1, SINAT2, SINAT3 and SINAT4. Interacts with SINAT5. Component of a phosphoinositide 3-kinase (PI3K) complex containing ATG6, SH3P2 and FREE1. Phosphorylated at Ser-530 and Ser-533 by SNRK2D/SNRK2.2 and SNRK2I/SNRK2.3 in response to abscisic acid (ABA). Phosphorylation is necessary for ABA-induced FREE1 nuclear import. Post-translationally, ubiquitinated by SINAT1, SINAT2, SINAT3 and SINAT4 for subsequent proteasomal degradation. Ubiquitous. Lowest expression in mature seeds.

It localises to the cytoplasm. It is found in the prevacuolar compartment membrane. The protein resides in the late endosome. The protein localises to the endosome. Its subcellular location is the multivesicular body. It localises to the nucleus. In terms of biological role, endosomal sorting complex required for transport (ESCRT) component regulating multivesicular body (MVB) protein sorting and plant growth. Required for the formation of intra-luminal vesicles (ILVs)in MVBs. Binds to phosphatidylinositol-3-phosphate (PI3P) and ubiquitin. Controls IRT1 recycling to the plasma membrane and impacts the polar delivery of this transporter to the outer plasma membrane domain. Regulates ubiquitin-dependent membrane protein degradation, vacuolar transport, autophagy, and vacuole biogenesis. ESCRT component that binds ubiquitin and regulates vacuolar sorting of proteins. Attenuates abscisic acid (ABA) signaling through RSL1-triggered degradation of the ABA receptors PYR1 and PYL4. Interacts with PYL4 and PYR1, and delivers the ubiquitinated ABA receptors as cargo to the vacuolar degradation pathway. In response to ABA, is phosphorylated by SnRK2 kinases which mediate FREE1 nuclear import. In the nucleus, interacts with the ABA-responsive transcription factors ABF4 and ABI5 to reduce their ability to bind to their cis-regulatory sequences of downstream genes, thus leading to transcriptional inhibition of ABA signaling pathway. Negatively regulates salt stress tolerance via a negative feedback loop involving ABA signaling pathway. The protein is Protein FREE1 of Arabidopsis thaliana (Mouse-ear cress).